Here is a 621-residue protein sequence, read N- to C-terminus: Phytoene desaturase (621 aa).

The first 23 residues, 1-23 (MPSTSKRPTAIVIGSGVGGVSTA), serve as a signal peptide directing secretion. The segment at 394–425 (HASQAHQLSASRNGHISSASPPDQPGLTPTEK) is disordered. Polar residues predominate over residues 397–414 (QAHQLSASRNGHISSASP). Residues 598–618 (WEQWVSVLIYLLVGIFAWLWM) traverse the membrane as a helical segment.

This sequence belongs to the carotenoid/retinoid oxidoreductase family. It depends on NAD(+) as a cofactor.

It is found in the membrane. It carries out the reaction 15-cis-phytoene + 5 A = all-trans-3,4-didehydrolycopene + 5 AH2. Its pathway is carotenoid biosynthesis; lycopene biosynthesis. Phytoene desaturase involved in the carotenoid biosynthesis pathway. Converts phytoene into 3,4-didehydrolycopene via the intermediary of phytofluene, zeta-carotene, neurosporene and lycopene, by introducing up to five double bonds into phytoene. This chain is Phytoene desaturase (PDH1), found in Cercospora nicotianae (Barn spot disease fungus).